The following is a 208-amino-acid chain: Ribosomal RNA large subunit methyltransferase E (208 aa).

Positions 63, 65, 83, 99, and 124 each coordinate S-adenosyl-L-methionine. K164 serves as the catalytic Proton acceptor.

The protein belongs to the class I-like SAM-binding methyltransferase superfamily. RNA methyltransferase RlmE family.

It localises to the cytoplasm. The catalysed reaction is uridine(2552) in 23S rRNA + S-adenosyl-L-methionine = 2'-O-methyluridine(2552) in 23S rRNA + S-adenosyl-L-homocysteine + H(+). Functionally, specifically methylates the uridine in position 2552 of 23S rRNA at the 2'-O position of the ribose in the fully assembled 50S ribosomal subunit. This is Ribosomal RNA large subunit methyltransferase E from Salmonella arizonae (strain ATCC BAA-731 / CDC346-86 / RSK2980).